The chain runs to 397 residues: Imidazolonepropionase (397 aa).

Residues histidine 66 and histidine 68 each coordinate Fe(3+). Zn(2+) is bound by residues histidine 66 and histidine 68. Residues arginine 75, tyrosine 138, and histidine 171 each coordinate 4-imidazolone-5-propanoate. Tyrosine 138 contributes to the N-formimidoyl-L-glutamate binding site. Fe(3+) is bound at residue histidine 236. Residue histidine 236 participates in Zn(2+) binding. Glutamine 239 contributes to the 4-imidazolone-5-propanoate binding site. Fe(3+) is bound at residue aspartate 311. Aspartate 311 serves as a coordination point for Zn(2+). N-formimidoyl-L-glutamate contacts are provided by asparagine 313 and glycine 315. Serine 316 is a 4-imidazolone-5-propanoate binding site.

It belongs to the metallo-dependent hydrolases superfamily. HutI family. Zn(2+) serves as cofactor. Fe(3+) is required as a cofactor.

It is found in the cytoplasm. It catalyses the reaction 4-imidazolone-5-propanoate + H2O = N-formimidoyl-L-glutamate. Its pathway is amino-acid degradation; L-histidine degradation into L-glutamate; N-formimidoyl-L-glutamate from L-histidine: step 3/3. Its function is as follows. Catalyzes the hydrolytic cleavage of the carbon-nitrogen bond in imidazolone-5-propanoate to yield N-formimidoyl-L-glutamate. It is the third step in the universal histidine degradation pathway. This Roseobacter denitrificans (strain ATCC 33942 / OCh 114) (Erythrobacter sp. (strain OCh 114)) protein is Imidazolonepropionase.